The sequence spans 138 residues: Transcription factor Atoh7-b (138 aa).

Residues K33–L85 form the bHLH domain.

The protein resides in the nucleus. Its subcellular location is the perikaryon. The protein localises to the cell projection. It localises to the axon. Functionally, transcription factor that binds to DNA at the consensus sequence 5'-CAG[GC]TG-3'. Positively regulates the determination of retinal ganglion cell fate and formation of the optic nerve and retino-hypothalamic tract. Required for retinal circadian rhythm photoentrainment. Plays a role in brainstem auditory signaling and binaural processing. Regulates the differentiation of olfactory receptor neurons. During retinal neurogenesis, activates the transcription of several genes such as brn3d, coe3, cbfa2t2, glis2, elrC and xgadd45-gamma. In Xenopus laevis (African clawed frog), this protein is Transcription factor Atoh7-b.